Here is a 139-residue protein sequence, read N- to C-terminus: Ubiquitin-conjugating enzyme spm2 (139 aa).

A UBC core domain is found at 5–139 (PRNFKLLEEL…PQPPEGSTFF (135 aa)).

This sequence belongs to the ubiquitin-conjugating enzyme family. In terms of assembly, heterodimer with ubc13.

Has a role in the DNA error-free postreplication repair (PRR) pathway. Lacks catalytic activity by itself. The ubc13/spm2 heterodimer catalyzes the synthesis of non-canonical poly-ubiquitin chains that are linked through 'Lys-63'. This is Ubiquitin-conjugating enzyme spm2 (spm2) from Schizosaccharomyces pombe (strain 972 / ATCC 24843) (Fission yeast).